A 209-amino-acid polypeptide reads, in one-letter code: 3-demethoxyubiquinol 3-hydroxylase (209 aa).

6 residues coordinate Fe cation: Glu-58, Glu-88, His-91, Glu-140, Glu-172, and His-175.

Belongs to the COQ7 family. It depends on Fe cation as a cofactor.

It localises to the cell membrane. It carries out the reaction a 5-methoxy-2-methyl-3-(all-trans-polyprenyl)benzene-1,4-diol + AH2 + O2 = a 3-demethylubiquinol + A + H2O. Its pathway is cofactor biosynthesis; ubiquinone biosynthesis. Catalyzes the hydroxylation of 2-nonaprenyl-3-methyl-6-methoxy-1,4-benzoquinol during ubiquinone biosynthesis. In Polynucleobacter necessarius subsp. necessarius (strain STIR1), this protein is 3-demethoxyubiquinol 3-hydroxylase.